Reading from the N-terminus, the 678-residue chain is F-box/LRR-repeat protein 5 (678 aa).

The interval 1-159 is hemerythrin-like; sequence MAPFPDEVDL…IKKKVIAQHC (159 aa). 7 residues coordinate Fe(3+): histidine 15, histidine 57, glutamate 58, glutamate 61, histidine 80, histidine 126, and glutamate 130. An F-box domain is found at 202-248; the sequence is SSSISSLPPEVMLNIFTYLNPQDLCRCSQVNTEWAQLAKTGSLWRHL. Positions 285–308 are disordered; that stretch reads YQEWDEDADIDESEETGEEEDSSI. Over residues 287-306 the composition is skewed to acidic residues; that stretch reads EWDEDADIDESEETGEEEDS. LRR repeat units lie at residues 314 to 340, 341 to 366, 367 to 392, 393 to 420, 566 to 594, 595 to 622, and 623 to 648; these read EKEL…VLAY, SSAT…DLTQ, TDIS…DLSG, CDKI…RLLK, HSDI…SLSG, CHQI…NLSG, and CLNV…HFYY. Positions 649, 663, 673, and 674 each coordinate [2Fe-2S] cluster. The stretch at 655–678 is one LRR 8 repeat; that stretch reads PHGATASGCQNLQCGFRMCCRSGE.

Part of a SCF (SKP1-cullin-F-box) protein ligase complex. Requires [2Fe-2S] cluster as cofactor. In terms of processing, ubiquitinated upon iron and oxygen depletion, leading to its degradation by the proteasome. Ubiquitination is regulated by the hemerythrin-like region that acts as an oxygen and iron sensor.

The protein resides in the cytoplasm. It localises to the perinuclear region. Its subcellular location is the nucleus. It participates in protein modification; protein ubiquitination. Component of some SCF (SKP1-cullin-F-box) protein ligase complex that plays a central role in iron homeostasis by promoting the ubiquitination and subsequent degradation of ireb2/irp2. Upon high iron and oxygen level, it specifically recognizes and binds ireb2/irp2, promoting its ubiquitination and degradation by the proteasome. The sequence is that of F-box/LRR-repeat protein 5 (fbxl5) from Xenopus laevis (African clawed frog).